We begin with the raw amino-acid sequence, 201 residues long: Holliday junction branch migration complex subunit RuvA (201 aa).

The domain I stretch occupies residues 1 to 63 (MISHFSGTVS…EESLTLYGFV (63 aa)). The tract at residues 64–142 (EADDRDAFEL…ALAPRGASAS (79 aa)) is domain II. The flexible linker stretch occupies residues 143–153 (GATHVAAPWRE). The segment at 153–201 (EQVAEGLVGLGWSTKDAEKAVDKVVALKEADPAMSIGNLMRAALRSLAR) is domain III.

It belongs to the RuvA family. As to quaternary structure, homotetramer. Forms an RuvA(8)-RuvB(12)-Holliday junction (HJ) complex. HJ DNA is sandwiched between 2 RuvA tetramers; dsDNA enters through RuvA and exits via RuvB. An RuvB hexamer assembles on each DNA strand where it exits the tetramer. Each RuvB hexamer is contacted by two RuvA subunits (via domain III) on 2 adjacent RuvB subunits; this complex drives branch migration. In the full resolvosome a probable DNA-RuvA(4)-RuvB(12)-RuvC(2) complex forms which resolves the HJ.

It localises to the cytoplasm. In terms of biological role, the RuvA-RuvB-RuvC complex processes Holliday junction (HJ) DNA during genetic recombination and DNA repair, while the RuvA-RuvB complex plays an important role in the rescue of blocked DNA replication forks via replication fork reversal (RFR). RuvA specifically binds to HJ cruciform DNA, conferring on it an open structure. The RuvB hexamer acts as an ATP-dependent pump, pulling dsDNA into and through the RuvAB complex. HJ branch migration allows RuvC to scan DNA until it finds its consensus sequence, where it cleaves and resolves the cruciform DNA. The sequence is that of Holliday junction branch migration complex subunit RuvA from Cutibacterium acnes (strain DSM 16379 / KPA171202) (Propionibacterium acnes).